The chain runs to 262 residues: Small ribosomal subunit protein uS2 (262 aa).

The segment at 224 to 262 (GKQGQDDAQQETADDNAANETVSEDSLKNLKNSVEGKED) is disordered.

This sequence belongs to the universal ribosomal protein uS2 family.

The sequence is that of Small ribosomal subunit protein uS2 from Limosilactobacillus reuteri (strain DSM 20016) (Lactobacillus reuteri).